Here is a 608-residue protein sequence, read N- to C-terminus: Albumin 1 (608 aa).

A signal peptide spans 1-14; the sequence is MQWLSVCSLLVLLS. The propeptide occupies 15-18; it reads VLSR. 3 Albumin domains span residues 19–205, 206–398, and 402–600; these read SQAQ…TFQH, AVMK…AGSD, and KITD…KLVS. Intrachain disulfides connect Cys-26-Cys-72, Cys-71-Cys-80, Cys-93-Cys-108, Cys-107-Cys-118, Cys-142-Cys-187, Cys-186-Cys-195, Cys-218-Cys-264, Cys-263-Cys-271, Cys-283-Cys-299, Cys-298-Cys-309, Cys-336-Cys-381, Cys-380-Cys-389, Cys-414-Cys-460, Cys-459-Cys-471, Cys-484-Cys-500, Cys-499-Cys-510, Cys-537-Cys-582, and Cys-581-Cys-590. Residue Asn-501 is glycosylated (N-linked (GlcNAc...) asparagine).

The protein belongs to the ALB/AFP/VDB family. As to expression, plasma.

The protein localises to the secreted. Binds water, Ca(2+), Na(+), K(+), fatty acids, hormones, bilirubin and drugs. Its main function is the regulation of the colloidal osmotic pressure of blood. This is Albumin 1 (alb1) from Salmo salar (Atlantic salmon).